Reading from the N-terminus, the 130-residue chain is L-aspartate semialdehyde sulfurtransferase iron-sulfur subunit (130 aa).

2 consecutive 4Fe-4S ferredoxin-type domains span residues Arg-72–Thr-101 and Trp-102–Glu-130. Residues Cys-81, Cys-84, Cys-87, Cys-91, Cys-111, Cys-114, Cys-117, and Cys-121 each contribute to the [4Fe-4S] cluster site.

May form a complex with MA_1821. It depends on [4Fe-4S] cluster as a cofactor.

It functions in the pathway amino-acid biosynthesis. Required for O-acetylhomoserine sulfhydrylase (OAHS)-independent homocysteine (Hcy) biosynthesis. Together with MA_1821, catalyzes the condensation of sulfide with aspartate semialdehyde to generate homocysteine. May be involved in the reduction of the disulfide formed in MA_1821. The chain is L-aspartate semialdehyde sulfurtransferase iron-sulfur subunit from Methanosarcina acetivorans (strain ATCC 35395 / DSM 2834 / JCM 12185 / C2A).